The following is a 249-amino-acid chain: Probable transglycosylase SceD 2 (249 aa).

Positions 1 to 27 (MKKTVIASTLAVGLGVTGIAAGNSADA) are cleaved as a signal peptide. Composition is skewed to low complexity over residues 80-95 (WSYG…ASSE) and 103-171 (QQTA…SSSS). Residues 80–203 (WSYGEGSGEG…PSSGASGKFQ (124 aa)) are disordered. Composition is skewed to polar residues over residues 172–182 (GVNAHLQQIAQ) and 192–203 (TNPSSGASGKFQ).

This sequence belongs to the transglycosylase family. SceD subfamily.

Its subcellular location is the secreted. In terms of biological role, is able to cleave peptidoglycan and affects clumping and separation of bacterial cells. The protein is Probable transglycosylase SceD 2 (sceD2) of Staphylococcus saprophyticus subsp. saprophyticus (strain ATCC 15305 / DSM 20229 / NCIMB 8711 / NCTC 7292 / S-41).